The following is a 221-amino-acid chain: Alpha-ketoglutarate-dependent dioxygenase alkB homolog 7, mitochondrial (221 aa).

Residues 1–23 (MAGGGQVVLRTLSQQGWVRGSGA) constitute a mitochondrion transit peptide. The Fe cation site is built by histidine 121 and aspartate 123. 2-oxoglutarate is bound at residue tyrosine 165. Residue histidine 177 participates in Fe cation binding. 2-oxoglutarate is bound by residues 197-199 (RIS) and arginine 203.

It belongs to the alkB family. Fe(2+) serves as cofactor.

It localises to the mitochondrion matrix. May function as protein hydroxylase; can catalyze auto-hydroxylation at Leu-110 (in vitro), but this activity may be due to the absence of the true substrate. Required to induce programmed necrosis in response to DNA damage caused by cytotoxic alkylating agents. Acts by triggering the collapse of mitochondrial membrane potential and loss of mitochondrial function that leads to energy depletion and cell death. ALKBH7-mediated necrosis is probably required to prevent the accumulation of cells with DNA damage. Does not display DNA demethylase activity. Involved in fatty acid metabolism. The polypeptide is Alpha-ketoglutarate-dependent dioxygenase alkB homolog 7, mitochondrial (ALKBH7) (Bos taurus (Bovine)).